Here is a 172-residue protein sequence, read N- to C-terminus: UPF0102 protein Pcryo_2198 (172 aa).

Belongs to the UPF0102 family.

The chain is UPF0102 protein Pcryo_2198 from Psychrobacter cryohalolentis (strain ATCC BAA-1226 / DSM 17306 / VKM B-2378 / K5).